Reading from the N-terminus, the 135-residue chain is ATP synthase epsilon chain (135 aa).

Belongs to the ATPase epsilon chain family. In terms of assembly, F-type ATPases have 2 components, CF(1) - the catalytic core - and CF(0) - the membrane proton channel. CF(1) has five subunits: alpha(3), beta(3), gamma(1), delta(1), epsilon(1). CF(0) has three main subunits: a, b and c.

Its subcellular location is the cell inner membrane. Functionally, produces ATP from ADP in the presence of a proton gradient across the membrane. The protein is ATP synthase epsilon chain of Granulibacter bethesdensis (strain ATCC BAA-1260 / CGDNIH1).